The sequence spans 107 residues: Urease subunit beta (107 aa).

The protein belongs to the urease beta subunit family. As to quaternary structure, heterotrimer of UreA (gamma), UreB (beta) and UreC (alpha) subunits. Three heterotrimers associate to form the active enzyme.

It is found in the cytoplasm. It catalyses the reaction urea + 2 H2O + H(+) = hydrogencarbonate + 2 NH4(+). The protein operates within nitrogen metabolism; urea degradation; CO(2) and NH(3) from urea (urease route): step 1/1. This chain is Urease subunit beta, found in Bacillus sp. (strain TB-90).